Consider the following 103-residue polypeptide: UPF0235 protein RHECIAT_CH0004196 (103 aa).

This sequence belongs to the UPF0235 family.

The protein is UPF0235 protein RHECIAT_CH0004196 of Rhizobium etli (strain CIAT 652).